We begin with the raw amino-acid sequence, 62 residues long: U10-buthitoxin-Hj1a (62 aa).

An N-terminal signal peptide occupies residues 1–22 (MQKIFIILVLFCILKFNVDVEG). Disulfide bonds link Cys-28–Cys-46, Cys-33–Cys-59, and Cys-37–Cys-61.

It belongs to the short scorpion toxin superfamily. Potassium channel inhibitor family. Alpha-KTx 23 subfamily. As to expression, expressed by the venom gland.

It is found in the secreted. Its function is as follows. May block potassium channels. The protein is U10-buthitoxin-Hj1a of Hottentotta judaicus (Black scorpion).